A 1235-amino-acid chain; its full sequence is UPF0507 protein DEHA2G04334g (1235 aa).

Residues 323-487 (QNDDSDAIKI…LSSSMNDEPQ (165 aa)) form the VPS9 domain. The disordered stretch occupies residues 1097–1124 (STTEADTTDTTDATDATHASPNLANSTN). Low complexity predominate over residues 1100 to 1115 (EADTTDTTDATDATHA).

Belongs to the UPF0507 family.

The polypeptide is UPF0507 protein DEHA2G04334g (Debaryomyces hansenii (strain ATCC 36239 / CBS 767 / BCRC 21394 / JCM 1990 / NBRC 0083 / IGC 2968) (Yeast)).